The sequence spans 466 residues: Ribosome biogenesis protein YTM1 (466 aa).

The segment at 11–99 (IKIKFFTNEE…EAFLTLEYTR (89 aa)) is ubiquitin-like (UBL) domain. The sufficient for interaction with ERB1 and association with 66S pre-ribosomes stretch occupies residues 109-466 (SFNNDDWISS…QINKGSDIAK (358 aa)). WD repeat units lie at residues 124–163 (PTTK…EKQY), 165–203 (GHSA…IIDE), 219–258 (GHKA…MTSI), 296–336 (GHSE…CVDT), 338–377 (TTGY…TSDQ), 384–424 (GHTN…SLYT), and 431–466 (STNA…DIAK).

The protein belongs to the WD repeat WDR12/YTM1 family. In terms of assembly, component of the NOP7 complex, composed of ERB1, NOP7 and YTM1. The complex is held together by ERB1, which interacts with NOP7 via its N-terminal domain and with YTM1 via a high-affinity interaction between the seven-bladed beta-propeller domains of the 2 proteins. The NOP7 complex associates with the 66S pre-ribosome. Interacts (via UBL domain) with MDN1 (via VWFA/MIDAS domain).

The protein resides in the nucleus. Its subcellular location is the nucleolus. It is found in the nucleoplasm. In terms of biological role, component of the NOP7 complex, which is required for maturation of the 25S and 5.8S ribosomal RNAs and formation of the 60S ribosome. This is Ribosome biogenesis protein YTM1 from Candida albicans (strain SC5314 / ATCC MYA-2876) (Yeast).